Here is an 832-residue protein sequence, read N- to C-terminus: Translation initiation factor IF-2 (832 aa).

The disordered stretch occupies residues 1–244 (MSDTDGKKTL…KAMGGSQERE (244 aa)). Positions 18–27 (TGQVKQSFSH) are enriched in polar residues. Over residues 81–141 (KANESEEAER…EARKKAEADA (61 aa)) the composition is skewed to basic and acidic residues. A compositionally biased stretch (low complexity) spans 142–171 (SSKPAAARSKADDPATMDPAAAQAAEARGA). 2 stretches are compositionally biased toward basic and acidic residues: residues 178–201 (PRKE…DDRR) and 227–244 (RKQE…QERE). Residues 329–497 (PRPPVITVMG…SIALQAEILE (169 aa)) form the tr-type G domain. The segment at 338 to 345 (GHVDHGKT) is G1. Position 338 to 345 (338 to 345 (GHVDHGKT)) interacts with GTP. Residues 363 to 367 (GITQH) form a G2 region. The interval 385–388 (DTPG) is G3. Residues 385–389 (DTPGH) and 439–442 (NKID) each bind GTP. The interval 439-442 (NKID) is G4. The tract at residues 475-477 (SAI) is G5.

It belongs to the TRAFAC class translation factor GTPase superfamily. Classic translation factor GTPase family. IF-2 subfamily.

The protein localises to the cytoplasm. One of the essential components for the initiation of protein synthesis. Protects formylmethionyl-tRNA from spontaneous hydrolysis and promotes its binding to the 30S ribosomal subunits. Also involved in the hydrolysis of GTP during the formation of the 70S ribosomal complex. This chain is Translation initiation factor IF-2, found in Dinoroseobacter shibae (strain DSM 16493 / NCIMB 14021 / DFL 12).